The chain runs to 917 residues: PAX3- and PAX7-binding protein 1 (917 aa).

The span at 1-11 shows a compositional bias: basic residues; that stretch reads MFRKARRVNVR. 3 disordered regions span residues 1–123, 143–205, and 229–275; these read MFRK…FKVK, LEKS…GAFS, and RKKR…RIVF. Ser16 is modified (phosphoserine). Residues 16 to 28 show a composition bias toward acidic residues; that stretch reads SEEEERERDEEQE. Composition is skewed to gly residues over residues 40-50 and 73-85; these read EEAGPGGGDRA and AEAG…GAEP. A Glycyl lysine isopeptide (Lys-Gly) (interchain with G-Cter in SUMO1); alternate cross-link involves residue Lys149. Residue Lys149 forms a Glycyl lysine isopeptide (Lys-Gly) (interchain with G-Cter in SUMO2); alternate linkage. 3 positions are modified to phosphoserine: Ser154, Ser155, and Ser158. Positions 161–172 are enriched in basic and acidic residues; it reads PLDKTGHVKDTN. A compositionally biased stretch (acidic residues) spans 183–193; sequence GEDEMDMESEK. Ser191 bears the Phosphoserine mark. Positions 234–256 are enriched in basic and acidic residues; sequence MARELGDFTPHDNEPGKGRLVRE. Residues 257 to 268 show a composition bias toward acidic residues; sequence DENDASDDEDDD. Phosphoserine is present on residues Ser262 and Ser295. 2 disordered regions span residues 362-381 and 530-564; these read SSDA…TPSN and AERE…EETS. Residues 378 to 558 are necessary and sufficient for interaction with PAX7; sequence TPSNEMTPVT…MADHLEGLSS (181 aa). Residues 542–554 show a composition bias toward basic and acidic residues; the sequence is AREQTGKMADHLE. Ser557 and Ser558 each carry phosphoserine. Phosphothreonine is present on Thr563.

The protein belongs to the GCF family. As to quaternary structure, interacts with PAX3 and PAX7. Interacts with WDR5; associates with a histone methyltransferase (HMT) complex composed at least of RBBP5, ASH2L, SET1, SET2 and KMT2A/MLL1, KMT2D/MLL2, KMT2C/MLL3 and KMT2B/MLL4 through direct interaction with WDR5. In terms of tissue distribution, ubiquitous.

The protein resides in the nucleus. Functionally, adapter protein linking the transcription factors PAX3 and PAX7 to the histone methylation machinery and involved in myogenesis. Associates with a histone methyltransferase complex that specifically mediates dimethylation and trimethylation of 'Lys-4' of histone H3. Mediates the recruitment of that complex to the transcription factors PAX3 and PAX7 on chromatin to regulate the expression of genes involved in muscle progenitor cells proliferation including ID3 and CDC20. This Homo sapiens (Human) protein is PAX3- and PAX7-binding protein 1 (PAXBP1).